Reading from the N-terminus, the 629-residue chain is tRNA uridine 5-carboxymethylaminomethyl modification enzyme MnmG (629 aa).

Residues 13–18, valine 125, and serine 180 each bind FAD; that span reads GGGHAG. 273–287 is a binding site for NAD(+); that stretch reads GPRYCPSIEDKVMRF. Glutamine 370 contributes to the FAD binding site.

It belongs to the MnmG family. In terms of assembly, homodimer. Heterotetramer of two MnmE and two MnmG subunits. Requires FAD as cofactor.

The protein resides in the cytoplasm. In terms of biological role, NAD-binding protein involved in the addition of a carboxymethylaminomethyl (cmnm) group at the wobble position (U34) of certain tRNAs, forming tRNA-cmnm(5)s(2)U34. This chain is tRNA uridine 5-carboxymethylaminomethyl modification enzyme MnmG, found in Klebsiella pneumoniae subsp. pneumoniae (strain ATCC 700721 / MGH 78578).